A 691-amino-acid chain; its full sequence is Penicillin-binding protein 2D (691 aa).

Residues 1–19 (MDAMTNKRLRLTLKTVRAF) are Cytoplasmic-facing. A helical; Signal-anchor for type II membrane protein transmembrane segment spans residues 20 to 40 (IFLGAFAALAAAAVFMTVILI). At 41-691 (AKYQGAPSVQ…WWDKWLGRHH (651 aa)) the chain is on the extracellular side. The segment at 55–223 (TILYASDGSK…PSGYSPYVNE (169 aa)) is transglycosylase. The active-site Proton donor; for transglycosylase activity is Glu-94. The tract at residues 327-605 (VGFSAIDPRT…AKTIWADFME (279 aa)) is transpeptidase. Ser-365 functions as the Acyl-ester intermediate; for transpeptidase activity in the catalytic mechanism. The disordered stretch occupies residues 663-691 (AKQTKDRLPSKEKPASEKKWWDKWLGRHH). The segment covering 664–691 (KQTKDRLPSKEKPASEKKWWDKWLGRHH) has biased composition (basic and acidic residues).

In the N-terminal section; belongs to the glycosyltransferase 51 family. The protein in the C-terminal section; belongs to the transpeptidase family.

It is found in the cell membrane. The enzyme catalyses [GlcNAc-(1-&gt;4)-Mur2Ac(oyl-L-Ala-gamma-D-Glu-L-Lys-D-Ala-D-Ala)](n)-di-trans,octa-cis-undecaprenyl diphosphate + beta-D-GlcNAc-(1-&gt;4)-Mur2Ac(oyl-L-Ala-gamma-D-Glu-L-Lys-D-Ala-D-Ala)-di-trans,octa-cis-undecaprenyl diphosphate = [GlcNAc-(1-&gt;4)-Mur2Ac(oyl-L-Ala-gamma-D-Glu-L-Lys-D-Ala-D-Ala)](n+1)-di-trans,octa-cis-undecaprenyl diphosphate + di-trans,octa-cis-undecaprenyl diphosphate + H(+). The catalysed reaction is Preferential cleavage: (Ac)2-L-Lys-D-Ala-|-D-Ala. Also transpeptidation of peptidyl-alanyl moieties that are N-acyl substituents of D-alanine.. It functions in the pathway cell wall biogenesis; peptidoglycan biosynthesis. In terms of biological role, involved in the polymerization and cross-linking of spore peptidoglycan. May be required for synthesis of the spore germ cell wall, the first layer of peptidoglycan synthesized on the surface of the inner forespore membrane. This chain is Penicillin-binding protein 2D (pbpG), found in Bacillus subtilis (strain 168).